The sequence spans 523 residues: GMP synthase [glutamine-hydrolyzing] (523 aa).

The region spanning 8-205 (KILILDFGSQ…VVNICGCTTN (198 aa)) is the Glutamine amidotransferase type-1 domain. Cys85 (nucleophile) is an active-site residue. Catalysis depends on residues His179 and Glu181. A GMPS ATP-PPase domain is found at 206–398 (WTPENIIEDA…LGLPAEMLNR (193 aa)). ATP is bound at residue 233-239 (SGGVDSS).

As to quaternary structure, homodimer.

It carries out the reaction XMP + L-glutamine + ATP + H2O = GMP + L-glutamate + AMP + diphosphate + 2 H(+). Its pathway is purine metabolism; GMP biosynthesis; GMP from XMP (L-Gln route): step 1/1. Its function is as follows. Catalyzes the synthesis of GMP from XMP. The protein is GMP synthase [glutamine-hydrolyzing] of Mannheimia succiniciproducens (strain KCTC 0769BP / MBEL55E).